The primary structure comprises 155 residues: Protein SprT-like (155 aa).

The SprT-like domain maps to 7 to 145; it reads QRHMEEVSLQ…GSCGGKLIQI (139 aa). His-67 is a Zn(2+) binding site. Residue Glu-68 is part of the active site. A Zn(2+)-binding site is contributed by His-71.

Belongs to the SprT family. It depends on Zn(2+) as a cofactor.

The protein resides in the cytoplasm. The chain is Protein SprT-like from Listeria monocytogenes serotype 4a (strain HCC23).